The following is a 342-amino-acid chain: Probable dual-specificity RNA methyltransferase RlmN (342 aa).

Glu91 functions as the Proton acceptor in the catalytic mechanism. Residues 97-327 (YKHGNSICVS…TTIRREMGAD (231 aa)) form the Radical SAM core domain. A disulfide bond links Cys104 and Cys332. 3 residues coordinate [4Fe-4S] cluster: Cys111, Cys115, and Cys118. S-adenosyl-L-methionine contacts are provided by residues 158–159 (GE), Ser190, 213–215 (SLH), and Asn289. The active-site S-methylcysteine intermediate is Cys332.

It belongs to the radical SAM superfamily. RlmN family. [4Fe-4S] cluster serves as cofactor.

It is found in the cytoplasm. It catalyses the reaction adenosine(2503) in 23S rRNA + 2 reduced [2Fe-2S]-[ferredoxin] + 2 S-adenosyl-L-methionine = 2-methyladenosine(2503) in 23S rRNA + 5'-deoxyadenosine + L-methionine + 2 oxidized [2Fe-2S]-[ferredoxin] + S-adenosyl-L-homocysteine. The enzyme catalyses adenosine(37) in tRNA + 2 reduced [2Fe-2S]-[ferredoxin] + 2 S-adenosyl-L-methionine = 2-methyladenosine(37) in tRNA + 5'-deoxyadenosine + L-methionine + 2 oxidized [2Fe-2S]-[ferredoxin] + S-adenosyl-L-homocysteine. Functionally, specifically methylates position 2 of adenine 2503 in 23S rRNA and position 2 of adenine 37 in tRNAs. The sequence is that of Probable dual-specificity RNA methyltransferase RlmN from Clostridium botulinum (strain Okra / Type B1).